A 328-amino-acid polypeptide reads, in one-letter code: Phenylalanine--tRNA ligase alpha subunit (328 aa).

E253 is a Mg(2+) binding site.

This sequence belongs to the class-II aminoacyl-tRNA synthetase family. Phe-tRNA synthetase alpha subunit type 1 subfamily. In terms of assembly, tetramer of two alpha and two beta subunits. The cofactor is Mg(2+).

It is found in the cytoplasm. It catalyses the reaction tRNA(Phe) + L-phenylalanine + ATP = L-phenylalanyl-tRNA(Phe) + AMP + diphosphate + H(+). This is Phenylalanine--tRNA ligase alpha subunit from Actinobacillus pleuropneumoniae serotype 7 (strain AP76).